The primary structure comprises 715 residues: DNA-directed RNA polymerase subunit beta' (715 aa).

Zn(2+) is bound by residues C69, C71, C87, and C90. A disordered region spans residues 244 to 272; that stretch reads APESQSEVIEAQGPVPQAEEEKQRDQSIQ. Mg(2+)-binding residues include D520, D522, and D524.

It belongs to the RNA polymerase beta' chain family. RpoC1 subfamily. In terms of assembly, in plastids the minimal PEP RNA polymerase catalytic core is composed of four subunits: alpha, beta, beta', and beta''. When a (nuclear-encoded) sigma factor is associated with the core the holoenzyme is formed, which can initiate transcription. It depends on Mg(2+) as a cofactor. Zn(2+) is required as a cofactor.

Its subcellular location is the plastid. It is found in the chloroplast. The catalysed reaction is RNA(n) + a ribonucleoside 5'-triphosphate = RNA(n+1) + diphosphate. In terms of biological role, DNA-dependent RNA polymerase catalyzes the transcription of DNA into RNA using the four ribonucleoside triphosphates as substrates. This Zygnema circumcarinatum (Green alga) protein is DNA-directed RNA polymerase subunit beta'.